The sequence spans 196 residues: uncharacterized protein (196 aa).

A signal peptide spans 1–27 (MSVLSRAVQLAFVALGLCLFFSNLVAA).

Its subcellular location is the secreted. This is an uncharacterized protein from Arthroderma benhamiae (strain ATCC MYA-4681 / CBS 112371) (Trichophyton mentagrophytes).